A 445-amino-acid polypeptide reads, in one-letter code: D-serine transporter DsdX (445 aa).

Topologically, residues 1 to 4 (MHSQ) are cytoplasmic. A helical transmembrane segment spans residues 5–25 (IWVVSTLLISIVLIVLTIVKF). The Periplasmic segment spans residues 26–28 (KFH). The chain crosses the membrane as a helical span at residues 29 to 49 (PFLALLLASFFVGTMMGMGPL). Over 50 to 56 (DMVNAIE) the chain is Cytoplasmic. The chain crosses the membrane as a helical span at residues 57 to 77 (SGIGGTLGFLAAVIGLGTILG). The Periplasmic portion of the chain corresponds to 78–105 (KMMEVSGAAERIGLTLQRCRWLSVDVIM). Residues 106–126 (VLVGLICGITLFVEVGVVLLI) traverse the membrane as a helical segment. Topologically, residues 127–139 (PLAFSIAKKTNTS) are cytoplasmic. A helical transmembrane segment spans residues 140 to 160 (LLKLAIPLCTALMAVHCVVPP). At 161–177 (HPAALYVANKLGADIGS) the chain is on the periplasmic side. A helical membrane pass occupies residues 178-198 (VIVYGLLVGLMASLIGGPLFL). Residues 199–223 (KFLGQRLPFKPVPTEFADLKVRDEK) lie on the Cytoplasmic side of the membrane. A helical transmembrane segment spans residues 224–244 (TLPSLGATLFTILLPIALMLV). At 245–257 (KTIAELNMARESG) the chain is on the periplasmic side. The helical transmembrane segment at 258–278 (LYILVEFIGNPITAMFIAVFV) threads the bilayer. Topologically, residues 279-301 (AYYVLGIRQHMSMGTMLTHTENG) are cytoplasmic. Residues 302–322 (FGSIANILLIIGAGGAFNAIL) traverse the membrane as a helical segment. The Periplasmic segment spans residues 323-342 (KSSSLADTLAVILSNMHMHP). 3 consecutive transmembrane segments (helical) span residues 343–363 (ILLA…ATVA), 364–384 (MMGA…ISPE), and 385–405 (IIAI…DSLF). The Cytoplasmic segment spans residues 406 to 424 (WLVKQYCGATLNETFKYYT). Residues 425–445 (TATFIASVVALAGTFLLSFII) form a helical membrane-spanning segment.

Belongs to the GntP permease family.

It localises to the cell inner membrane. Functionally, a D-serine-specific transporter, may function as a H(+) symporter. This chain is D-serine transporter DsdX, found in Escherichia coli (strain K12).